The sequence spans 23 residues: YMVIQGEPGAVIRLGDYLIDQGL.

Belongs to the profilin family. In terms of assembly, occurs in many kinds of cells as a complex with monomeric actin in a 1:1 ratio.

The protein resides in the cytoplasm. It is found in the cytoskeleton. Binds to actin and affects the structure of the cytoskeleton. At high concentrations, profilin prevents the polymerization of actin, whereas it enhances it at low concentrations. By binding to PIP2, it inhibits the formation of IP3 and DG. The polypeptide is Profilin (Beta vulgaris (Sugar beet)).